Reading from the N-terminus, the 24-residue chain is Humanin (24 aa).

The tract at residues 1-12 is sufficient to interact with BID and BIM and to suppress BID and BIM activity; it reads MAPRGFSCLLLL. The interval 3–19 is sufficient for neuroprotective activity; that stretch reads PRGFSCLLLLTSEIDLP. The interval 5-12 is sufficient to interact with MPP8; it reads GFSCLLLL. Required for secretion stretches follow at residues 9–11 and 19–20; these read LLL and PV.

As to quaternary structure, homodimer. Interacts with amyloid-beta protein 42 (Abeta42); the interaction prevents Abeta42 fibril formation. Interacts with BAX; forms fibers with BAX which results in BAX conformational changes and sequestering of BAX into the fibers, preventing BAX activation. Interacts with both full-length BID and cleaved BID p15; forms fibers with BID which results in BID conformational changes and sequestering of BID into the fibers, preventing BID activation. Interacts with BIM isoform BimEL but not with BIM isoforms BimL or BimS; the interaction prevents BIM-induced apoptosis. Interacts with IGFBP3; competes with importin KPNB1 for binding to IGFBP3, blocking IGFBP3 nuclear import. Interacts with TRIM11. Interacts with MPP8. As to expression, expressed in testis, seminal plasma and sperm (at protein level). Higher seminal plasma levels are associated with normospermia than with oligospermia, asthenospermia or oligoasthenospermia (at protein level). Higher sperm levels are associated with normospermia than with asthenospermia (at protein level). Expressed in retinal epithelial cells (at protein level). Expressed in the heart, skeletal muscle, kidney and liver. Lesser but significant expression is observed in the brain and the gastrointestinal tract. Expressed in the AD brain, where it is found in some of the large intact neurons of the occipital lobes and small and round reactive glial cells in the hippocampus.

The protein localises to the secreted. It is found in the cytoplasm. Its subcellular location is the cell projection. It localises to the cilium. The protein resides in the flagellum. The protein localises to the nucleus. It is found in the mitochondrion. Functionally, plays a role as a neuroprotective factor. Protects against neuronal cell death induced by multiple different familial Alzheimer disease genes and amyloid-beta proteins in Alzheimer disease. Mediates its neuroprotective effect by interacting with a receptor complex composed of IL6ST/GP130, IL27RA/WSX1 and CNTFR. Also acts as a ligand for G-protein coupled receptors FPR2/FPRL1 and FPR3/FPRL2. Inhibits amyloid-beta protein 40 fibril formation. Also inhibits amyloid-beta protein 42 fibril formation. Suppresses apoptosis by binding to BAX and preventing the translocation of BAX from the cytosol to mitochondria. Also suppresses apoptosis by binding to BID and inhibiting the interaction of BID with BAX and BAK which prevents oligomerization of BAX and BAK and suppresses release of apoptogenic proteins from mitochondria. Forms fibers with BAX and also with BID, inducing BAX and BID conformational changes and sequestering them into the fibers which prevents their activation. Can also suppress apoptosis by interacting with BIM isoform BimEL, inhibiting BimEL-induced activation of BAX, blocking oligomerization of BAX and BAK, and preventing release of apoptogenic proteins from mitochondria. Plays a role in up-regulation of anti-apoptotic protein BIRC6/APOLLON, leading to inhibition of neuronal cell death. Binds to IGFBP3 and specifically blocks IGFBP3-induced cell death. Competes with importin KPNB1 for binding to IGFBP3 which is likely to block IGFBP3 nuclear import. Induces chemotaxis of mononuclear phagocytes via FPR2/FPRL1. Reduces aggregation and fibrillary formation by suppressing the effect of APP on mononuclear phagocytes and acts by competitively inhibiting the access of FPR2 to APP. Protects retinal pigment epithelium (RPE) cells against oxidative stress-induced and endoplasmic reticulum (ER) stress-induced apoptosis. Promotes mitochondrial biogenesis in RPE cells following oxidative stress and promotes STAT3 phosphorylation which leads to inhibition of CASP3 release. Also reduces CASP4 levels in RPE cells, suppresses ER stress-induced mitochondrial superoxide production and plays a role in up-regulation of mitochondrial glutathione. Reduces testicular hormone deprivation-induced apoptosis of germ cells at the nonandrogen-sensitive stages of the seminiferous epithelium cycle. Protects endothelial cells against free fatty acid-induced inflammation by suppressing oxidative stress, reducing expression of TXNIP and inhibiting activation of the NLRP3 inflammasome which inhibits expression of pro-inflammatory cytokines IL1B and IL18. Protects against high glucose-induced endothelial cell dysfunction by mediating activation of ERK5 which leads to increased expression of transcription factor KLF2 and prevents monocyte adhesion to endothelial cells. Inhibits the inflammatory response in astrocytes. Increases the expression of PPARGC1A/PGC1A in pancreatic beta cells which promotes mitochondrial biogenesis. Increases insulin sensitivity. In Homo sapiens (Human), this protein is Humanin.